Consider the following 442-residue polypeptide: Histidine--tRNA ligase (442 aa).

This sequence belongs to the class-II aminoacyl-tRNA synthetase family. Homodimer.

Its subcellular location is the cytoplasm. The enzyme catalyses tRNA(His) + L-histidine + ATP = L-histidyl-tRNA(His) + AMP + diphosphate + H(+). This chain is Histidine--tRNA ligase, found in Psychrobacter arcticus (strain DSM 17307 / VKM B-2377 / 273-4).